Reading from the N-terminus, the 257-residue chain is 4-hydroxy-tetrahydrodipicolinate reductase (257 aa).

7–12 (GCLGRM) lines the NAD(+) pocket. Arginine 34 is a binding site for NADP(+). NAD(+)-binding positions include 96-98 (GTT) and 117-120 (SCNM). Histidine 149 (proton donor/acceptor) is an active-site residue. A (S)-2,3,4,5-tetrahydrodipicolinate-binding site is contributed by histidine 150. Lysine 153 acts as the Proton donor in catalysis. Residue 159-160 (GT) participates in (S)-2,3,4,5-tetrahydrodipicolinate binding.

Belongs to the DapB family.

The protein localises to the cytoplasm. It catalyses the reaction (S)-2,3,4,5-tetrahydrodipicolinate + NAD(+) + H2O = (2S,4S)-4-hydroxy-2,3,4,5-tetrahydrodipicolinate + NADH + H(+). The enzyme catalyses (S)-2,3,4,5-tetrahydrodipicolinate + NADP(+) + H2O = (2S,4S)-4-hydroxy-2,3,4,5-tetrahydrodipicolinate + NADPH + H(+). It participates in amino-acid biosynthesis; L-lysine biosynthesis via DAP pathway; (S)-tetrahydrodipicolinate from L-aspartate: step 4/4. In terms of biological role, catalyzes the conversion of 4-hydroxy-tetrahydrodipicolinate (HTPA) to tetrahydrodipicolinate. This Anaplasma marginale (strain St. Maries) protein is 4-hydroxy-tetrahydrodipicolinate reductase.